Here is a 129-residue protein sequence, read N- to C-terminus: Sigma factor-binding protein Crl (129 aa).

The segment at threonine 99–valine 119 is essential for activity.

It belongs to the Crl family.

It is found in the cytoplasm. In terms of biological role, binds to the sigma-S subunit of RNA polymerase, activating expression of sigma-S-regulated genes. Stimulates RNA polymerase holoenzyme formation and may bind to several other sigma factors, such as sigma-70 and sigma-32. The protein is Sigma factor-binding protein Crl of Vibrio vulnificus (strain CMCP6).